The primary structure comprises 473 residues: Glutamate--tRNA ligase (473 aa).

Residues 9 to 19 carry the 'HIGH' region motif; sequence PSPTGYLHVGG. The Zn(2+) site is built by cysteine 98, cysteine 100, cysteine 125, and aspartate 127. The 'KMSKS' region signature appears at 237-241; the sequence is KLSKR. Lysine 240 is an ATP binding site.

It belongs to the class-I aminoacyl-tRNA synthetase family. Glutamate--tRNA ligase type 1 subfamily. As to quaternary structure, monomer. Zn(2+) serves as cofactor.

The protein localises to the cytoplasm. It carries out the reaction tRNA(Glu) + L-glutamate + ATP = L-glutamyl-tRNA(Glu) + AMP + diphosphate. Catalyzes the attachment of glutamate to tRNA(Glu) in a two-step reaction: glutamate is first activated by ATP to form Glu-AMP and then transferred to the acceptor end of tRNA(Glu). The polypeptide is Glutamate--tRNA ligase (Sodalis glossinidius (strain morsitans)).